A 355-amino-acid polypeptide reads, in one-letter code: Phosphoserine aminotransferase (355 aa).

An L-glutamate-binding site is contributed by Arg41. Residues 75–76 (AS), Trp99, Thr147, Asp166, and Gln189 each bind pyridoxal 5'-phosphate. The residue at position 190 (Lys190) is an N6-(pyridoxal phosphate)lysine. Position 231–232 (231–232 (NT)) interacts with pyridoxal 5'-phosphate.

Belongs to the class-V pyridoxal-phosphate-dependent aminotransferase family. SerC subfamily. In terms of assembly, homodimer. It depends on pyridoxal 5'-phosphate as a cofactor.

The protein resides in the cytoplasm. It catalyses the reaction O-phospho-L-serine + 2-oxoglutarate = 3-phosphooxypyruvate + L-glutamate. The enzyme catalyses 4-(phosphooxy)-L-threonine + 2-oxoglutarate = (R)-3-hydroxy-2-oxo-4-phosphooxybutanoate + L-glutamate. It participates in amino-acid biosynthesis; L-serine biosynthesis; L-serine from 3-phospho-D-glycerate: step 2/3. The protein operates within cofactor biosynthesis; pyridoxine 5'-phosphate biosynthesis; pyridoxine 5'-phosphate from D-erythrose 4-phosphate: step 3/5. Catalyzes the reversible conversion of 3-phosphohydroxypyruvate to phosphoserine and of 3-hydroxy-2-oxo-4-phosphonooxybutanoate to phosphohydroxythreonine. The chain is Phosphoserine aminotransferase from Parabacteroides distasonis (strain ATCC 8503 / DSM 20701 / CIP 104284 / JCM 5825 / NCTC 11152).